We begin with the raw amino-acid sequence, 176 residues long: MDAAFVITPMGVLTITDTLYDDLDISIMDFIGPYIIGNIKTVQIDVRDIKYSDMQKCYFSYKGKIVPQDSNDLARFNIYSICAAYRSKNTIIIACDYDIMLDIEDKHQPFYLFPSIDVFNATIIEAYNLYTAGDYHLIINPSDNLKMKLLFNSSFCISDGNGWIIIDGKCNSNFLS.

The N-terminal stretch at 1 to 14 is a signal peptide; that stretch reads MDAAFVITPMGVLT.

Belongs to the orthopoxvirus OPG163 family.

Its subcellular location is the host endosome. Its function is as follows. Mildly affects the expression of MHC class II molecules on the surface of host antigen presenting cells (APCs). The polypeptide is Protein OPG163 (OPG163) (Vaccinia virus (strain Western Reserve) (VACV)).